The primary structure comprises 477 residues: Serine/threonine protein phosphatase 2A 55 kDa regulatory subunit B' delta isoform (477 aa).

This sequence belongs to the phosphatase 2A regulatory subunit B56 family. PP2A consists of a common heteromeric enzyme, composed of a catalytic subunit (subunits C), a constant regulatory subunit (subunit A), and a variety of regulatory subunits such as subunits B (the R2/B/PR55/B55, R3/B''/PR72/PR130/PR59 and R5/B'/B56 families). Interacts with SRK2E/OST1. Expressed ubiquitously.

Its subcellular location is the cytoplasm. Its function is as follows. The B regulatory subunit may modulate substrate selectivity and catalytic activity, and may also direct the localization of the catalytic enzyme to a particular subcellular compartment. In Arabidopsis thaliana (Mouse-ear cress), this protein is Serine/threonine protein phosphatase 2A 55 kDa regulatory subunit B' delta isoform (B'DELTA).